A 420-amino-acid polypeptide reads, in one-letter code: Protein disulfide isomerase CRELD1 (420 aa).

Positions M1–V29 are cleaved as a signal peptide. Residues Q30–E362 are Extracellular-facing. The CXXC signature appears at C46–C49. Disulfide bonds link C46–C49, C155–C169, C163–C181, and C183–C192. In terms of domain architecture, EGF-like 1 spans L153–G193. The N-linked (GlcNAc...) asparagine glycan is linked to N205. FU repeat units lie at residues H208–S255 and S268–P315. The CXXC signature appears at C278–C281. 4 cysteine pairs are disulfide-bonded: C278/C281, C309/C321, C314/C330, and C332/C343. Positions D305–V344 constitute an EGF-like 2; calcium-binding domain. Residues L363–A383 form a helical membrane-spanning segment. Residue K384 is a topological domain, cytoplasmic. A helical membrane pass occupies residues G385 to L405. Topologically, residues S406–R420 are extracellular.

It belongs to the CRELD family.

The protein resides in the membrane. The enzyme catalyses Catalyzes the rearrangement of -S-S- bonds in proteins.. Functionally, protein disulfide isomerase. Promotes the localization of acetylcholine receptors (AChRs) to the plasma membrane. The chain is Protein disulfide isomerase CRELD1 (CRELD1) from Bos taurus (Bovine).